Here is a 71-residue protein sequence, read N- to C-terminus: Protein SlyX homolog (71 aa).

This sequence belongs to the SlyX family.

This Rhodopseudomonas palustris (strain HaA2) protein is Protein SlyX homolog.